A 527-amino-acid polypeptide reads, in one-letter code: Mitogen-activated protein kinase kinae MKK2 (527 aa).

Disordered regions lie at residues 1–143 (MHDQ…SAGS) and 156–189 (IGST…DKDG). Positions 107 to 129 (QQGQSASGGSESSAAHSRSGSFG) are enriched in low complexity. A compositionally biased stretch (polar residues) spans 134 to 143 (RTSNPTSAGS). Residues 177–189 (ERSDGGAGMDKDG) show a composition bias toward basic and acidic residues. In terms of domain architecture, Protein kinase spans 227-497 (IVELGGLGEG…PWRMLEHPWM (271 aa)). Residues 233 to 241 (LGEGAGGAV) and Lys256 each bind ATP.

This sequence belongs to the protein kinase superfamily. STE Ser/Thr protein kinase family. MAP kinase kinase subfamily. As to quaternary structure, interacts with the adapter protein MST50.

It catalyses the reaction L-seryl-[protein] + ATP = O-phospho-L-seryl-[protein] + ADP + H(+). The enzyme catalyses L-threonyl-[protein] + ATP = O-phospho-L-threonyl-[protein] + ADP + H(+). In terms of biological role, mitogen-activated protein kinase kinase; part of the MCK1-MKK2-MPS1 MAP kinase (MAPK) signal transduction cascade that is essential for appressorium formation, penetration and invasive growth. Beside its role in pathogenesis, the MPS1 cascade is active in conidiation and cellular stress responses. Targets downstream of the the MPS1-MAPK pathway include transcription factors MIG1 and SWI6, as well as GSK1 and MPG1. The chain is Mitogen-activated protein kinase kinae MKK2 from Pyricularia oryzae (strain 70-15 / ATCC MYA-4617 / FGSC 8958) (Rice blast fungus).